Consider the following 306-residue polypeptide: Aquaporin-1 (306 aa).

Residues 1–23 (MASTHSSLTTVQNNANNKSNRTL) are compositionally biased toward polar residues. The interval 1–24 (MASTHSSLTTVQNNANNKSNRTLN) is disordered. Residues 1–59 (MASTHSSLTTVQNNANNKSNRTLNTERRLSMESSVFTLYNKAADELDTSQRSAFQACHR) are Cytoplasmic-facing. The helical transmembrane segment at 60 to 80 (EFLAEFIGTVILVLLTCGFCA) threads the bilayer. Over 81–92 (EQTLHIEESKSW) the chain is Extracellular. Residues 93-113 (LTSSFGSGLSVLIGICVSGHV) form a helical membrane-spanning segment. Topologically, residues 114–145 (SGAHLNPAVTIAFCIFSGFPIRKVPSYITAQL) are cytoplasmic. The NPA 1 motif lies at 119–121 (NPA). The helical transmembrane segment at 146-166 (LGAFAGAALLYIIIEPAIVQF) threads the bilayer. Over 167-192 (DGGQRYILGEKSTAGIFGTYPPLYVG) the chain is Extracellular. A helical transmembrane segment spans residues 193–213 (IGSAIASEIMGTAMLLLVIMV). Residues 214–226 (TGHPNNLPYKSAQ) are Cytoplasmic-facing. Residues 227-247 (GAMIALGITTISLCIGYTSGF) traverse the membrane as a helical segment. Residues 248–278 (SLNPARDFGPRLFTAIAGWGFDVFKVYHYYA) are Extracellular-facing. The NPA 2 motif lies at 250 to 252 (NPA). A helical membrane pass occupies residues 279–299 (LVPMFAPILGGLVGLMLMMPF). Residues 300–306 (SFLSVRA) are Cytoplasmic-facing.

It belongs to the MIP/aquaporin (TC 1.A.8) family.

It is found in the cell membrane. It catalyses the reaction H2O(in) = H2O(out). Its function is as follows. Water channel required to facilitate the transport of water across membranes. Contributes to water uptake of spores during the early stages of spore germination. Aquaporins AQP1 and AQP2 act as extracellular pH sensors and enable the spores to hydrate under favorable conditions and to commence germination. Wounded vegetables and fruit present acidic pH, so the optimal pH range for germination is adapted to the relevant host pH. The protein is Aquaporin-1 of Rhizopus delemar (strain RA 99-880 / ATCC MYA-4621 / FGSC 9543 / NRRL 43880) (Mucormycosis agent).